We begin with the raw amino-acid sequence, 285 residues long: Acetyl-coenzyme A carboxylase carboxyl transferase subunit beta (285 aa).

Residues 22–285 (LWTKCEACGA…HPGVAYAPGV (264 aa)) form the CoA carboxyltransferase N-terminal domain. Positions 26, 29, 45, and 48 each coordinate Zn(2+). The C4-type zinc finger occupies 26–48 (CEACGAQIYKKEFQENLHVCPKC).

It belongs to the AccD/PCCB family. In terms of assembly, acetyl-CoA carboxylase is a heterohexamer composed of biotin carboxyl carrier protein (AccB), biotin carboxylase (AccC) and two subunits each of ACCase subunit alpha (AccA) and ACCase subunit beta (AccD). Zn(2+) is required as a cofactor.

The protein resides in the cytoplasm. It carries out the reaction N(6)-carboxybiotinyl-L-lysyl-[protein] + acetyl-CoA = N(6)-biotinyl-L-lysyl-[protein] + malonyl-CoA. The protein operates within lipid metabolism; malonyl-CoA biosynthesis; malonyl-CoA from acetyl-CoA: step 1/1. In terms of biological role, component of the acetyl coenzyme A carboxylase (ACC) complex. Biotin carboxylase (BC) catalyzes the carboxylation of biotin on its carrier protein (BCCP) and then the CO(2) group is transferred by the transcarboxylase to acetyl-CoA to form malonyl-CoA. In Thermus thermophilus (strain ATCC 27634 / DSM 579 / HB8), this protein is Acetyl-coenzyme A carboxylase carboxyl transferase subunit beta.